A 506-amino-acid chain; its full sequence is MLIKVNFMEHYLLNKQFELASAIKSRNKILIHKLVSDVLVSYNSLCYAVYKTLKNSDDKSSSNIQKKKKKKKNFQNLVDSLKCFVLNYDFYKIRCLNLYYLRNFIDCKDQFLHFHFLDIALQNLYSFIFFPFLESNLDKFTYGPRVFRSSIDAVKVLFLLGKQKKYSNYNKYLFCFAFNYTIVKCFDAVFNSWVLSNVSFIDKSILSFWVKNGFDNFYSGDQFFFQKKNFEINRGTSLIFLVIFNFVFMGMQFFLESSILSKFGFFSKFVLITDLNSVVILSSDLKTAKIVKSSLLIFFHSRGICQNFRDNSIVDFFCKNCENKNFVFCGITFHYKLIHGEYKFVLSPILEKIKNVKKKVLNLCKKFSKPLVLFDNIKPLMKSWFNSYKIIKNNYSFLKLSYWIVGKITKSIYLLYVNSNFERGKFGIRKGRRSGRLYKNIAAQVVKRLYFLKDQQRFFINTIEGKIIFKGFSVGLSKKNSIELKNFFSNSLKGKKFFATFGKNFF.

This sequence to group II intron maturases.

The protein localises to the plastid. It is found in the chloroplast. This is an uncharacterized protein from Euglena gracilis.